The chain runs to 797 residues: N-acetylneuraminate (7)9-O-acetyltransferase (797 aa).

The Cytoplasmic portion of the chain corresponds to 1–18 (MAALAYNLGKREINHYFS). Residues 19-39 (VRSAKVLALVAVLLLAACHLA) traverse the membrane as a helical segment. Topologically, residues 40–313 (SRRYRGNDSC…QPRPPVTLIQ (274 aa)) are lumenal. N-linked (GlcNAc...) asparagine glycosylation is present at Asn-46. Ser-94 acts as the Acyl-ester intermediate in catalysis. N-linked (GlcNAc...) asparagine glycosylation is found at Asn-175 and Asn-187. Residues Asp-270 and His-273 contribute to the active site. A helical membrane pass occupies residues 314–334 (KLAACFFTLSIIGYLIFYIIH). The Cytoplasmic portion of the chain corresponds to 335–363 (RNAHRKNKPCTDLESGEEKKNIINTPVSS). Residues 364–384 (LEILLQSFCKLGLIMAYFYMC) traverse the membrane as a helical segment. Residues 385-395 (DRANLFMKENK) are Lumenal-facing. The chain crosses the membrane as a helical span at residues 396–416 (FYTHSSFFIPIIYILVLGVFY). The Cytoplasmic portion of the chain corresponds to 417–439 (NENTKETKVLNREQTDEWKGWMQ). A helical transmembrane segment spans residues 440-460 (LVILIYHISGASTFLPVYMHI). A topological domain (lumenal) is located at residue Arg-461. The chain crosses the membrane as a helical span at residues 462–482 (VLVAAYLFQTGYGHFSYFWIK). Residues 483-486 (GDFG) lie on the Cytoplasmic side of the membrane. The chain crosses the membrane as a helical span at residues 487-507 (IYRVCQVLFRLNFLVVVLCIV). Over 508-513 (MDRPYQ) the chain is Lumenal. The helical transmembrane segment at 514–534 (FYYFVPLVTVWFMVIYVTLAL) threads the bilayer. The Cytoplasmic portion of the chain corresponds to 535-547 (WPQIIQKKANGNC). A helical transmembrane segment spans residues 548-568 (FWHFGLLLKLGFLLLFICFLA). Over 569–605 (YSQGAFEKIFSLWPLSKCFELKGNVYEWWFRWRLDRY) the chain is Lumenal. A helical membrane pass occupies residues 606 to 626 (VVFHGMLFAFIYLALQKRQIL). Residues 627–638 (SEGKGEPLFSNK) are Cytoplasmic-facing. A helical transmembrane segment spans residues 639–659 (ISNFLLFISVVSFLTYSIWAS). Topologically, residues 660-671 (SCKNKAECNELH) are lumenal. A helical membrane pass occupies residues 672–692 (PSVSVVQILAFILIRNIPGYA). At 693 to 698 (RSVYSS) the chain is on the cytoplasmic side. A helical membrane pass occupies residues 699–719 (FFAWFGKISLELFICQYHIWL). Residues 720–725 (AADTRG) lie on the Lumenal side of the membrane. The helical transmembrane segment at 726 to 746 (ILVLIPGNPMLNIIVSTFIFV) threads the bilayer. The Cytoplasmic segment spans residues 747-770 (CVAHEISQITNDLAQIIIPKDNSS). Residues 771–791 (LLKRLACIAAFFCGLLILSSI) form a helical membrane-spanning segment. The Lumenal portion of the chain corresponds to 792-797 (QDKSKH).

It belongs to the PC-esterase family. CASD1 subfamily. In terms of processing, N-glycosylated. Highly expressed in peripheral B lymphocytes.

The protein resides in the golgi apparatus membrane. The catalysed reaction is CMP-N-acetyl-beta-neuraminate + acetyl-CoA = CMP-N-acetyl-9-O-acetyl-beta-neuraminate + CoA. The enzyme catalyses a ganglioside GD3 (d18:1(4E)) + acetyl-CoA = a ganglioside Ac-O-7-GD3(d18:1(4E)) + CoA. It carries out the reaction CMP-N-acetyl-beta-neuraminate + acetyl-CoA = CMP-N-acetyl-7-O-acetyl-beta-neuraminate + CoA. In terms of biological role, key enzyme in the biosynthesis of O-acetylated (O-Ac) sialoglycans such as gangliosides O-AcGD3 and O-AcGD2, which affect various processes such as cell-cell interactions, host-pathogen recognition. Catalyzes the transfer of an acetyl group from a donor, the acetyl-coenzyme-A molecule (acetyl-CoA), to the C7/8/9 OH-position of a sialic acid residue. The primary site of O-acetyl group transfer on sialic acid seems to depend on cell type and can be C7, from which the O-acetyl group could subsequently migrate to the C8 and then to the C9 position, or at C9 with possibility of migrating to the C8 and then to the C7 position. Together with ST8SIA1 (GD3 synthase) it increases the levels of ganglioside Ac-O-7-GD3. Can transfer the acetyl group from acetyl-CoA to free sialate (N-acetylneuraminate, Neu5Ac) in vitro, but has preferred substrate specificity for CMP-activated sialate (CMP-Neu5Ac), resulting in the formation of 9-O-acetylated CMP-Neu5Ac (CMP-Neu5,9Ac2). CMP-Neu5,9Ac2 may be used by sialyltransferases as a sialate donor for glycoconjugate acceptors such as ganglioside GD3. O-acetylation at position C9 of ganglioside GD3 can counteract the pro-apoptotic effects of the ganglioside GD3 in tumor cells. The sequence is that of N-acetylneuraminate (7)9-O-acetyltransferase from Homo sapiens (Human).